The following is a 141-amino-acid chain: Large ribosomal subunit protein uL11 (141 aa).

The protein belongs to the universal ribosomal protein uL11 family. In terms of assembly, part of the ribosomal stalk of the 50S ribosomal subunit. Interacts with L10 and the large rRNA to form the base of the stalk. L10 forms an elongated spine to which L12 dimers bind in a sequential fashion forming a multimeric L10(L12)X complex. In terms of processing, one or more lysine residues are methylated.

In terms of biological role, forms part of the ribosomal stalk which helps the ribosome interact with GTP-bound translation factors. The sequence is that of Large ribosomal subunit protein uL11 from Campylobacter concisus (strain 13826).